The primary structure comprises 132 residues: Small ribosomal subunit protein uS8 (132 aa).

It belongs to the universal ribosomal protein uS8 family. In terms of assembly, part of the 30S ribosomal subunit. Contacts proteins S5 and S12.

One of the primary rRNA binding proteins, it binds directly to 16S rRNA central domain where it helps coordinate assembly of the platform of the 30S subunit. This chain is Small ribosomal subunit protein uS8, found in Oceanobacillus iheyensis (strain DSM 14371 / CIP 107618 / JCM 11309 / KCTC 3954 / HTE831).